The primary structure comprises 318 residues: C1GALT1-specific chaperone 1 (318 aa).

Residues 1–6 lie on the Cytoplasmic side of the membrane; the sequence is MLSESS. The chain crosses the membrane as a helical; Signal-anchor for type II membrane protein span at residues 7–26; that stretch reads SFLKGVMLGSIFCALITMLG. Over 27–318 the chain is Lumenal; that stretch reads HIRIGHGSRM…FLPPNGSDND (292 aa).

It belongs to the glycosyltransferase 31 family. Beta3-Gal-T subfamily. Associates with core 1 beta-3-galactosyltransferase (C1GALT1), probably not with the soluble active form.

The protein localises to the membrane. Functionally, probable chaperone required for the generation of 1 O-glycan Gal-beta1-3GalNAc-alpha1-Ser/Thr (T antigen), which is a precursor for many extended O-glycans in glycoproteins. Probably acts as a specific molecular chaperone assisting the folding/stability of core 1 beta-3-galactosyltransferase (C1GALT1). The polypeptide is C1GALT1-specific chaperone 1 (C1GALT1C1) (Bos taurus (Bovine)).